The chain runs to 140 residues: Lysozyme E (140 aa).

A signal peptide spans 1 to 18; that stretch reads MKAFIVLVALAMAAPALG. One can recognise a C-type lysozyme domain in the interval 19 to 140; that stretch reads RTLDRCSLAR…GWLPSIDGCF (122 aa). 4 cysteine pairs are disulfide-bonded: Cys24–Cys139, Cys45–Cys129, Cys80–Cys96, and Cys92–Cys110. Residues Glu50 and Asp68 contribute to the active site.

It belongs to the glycosyl hydrolase 22 family. As to expression, found in the midgut.

The catalysed reaction is Hydrolysis of (1-&gt;4)-beta-linkages between N-acetylmuramic acid and N-acetyl-D-glucosamine residues in a peptidoglycan and between N-acetyl-D-glucosamine residues in chitodextrins.. Its function is as follows. Unlikely to play an active role in the humoral immune defense. May have a function in the digestion of bacteria in the food. The protein is Lysozyme E (LysE) of Drosophila melanogaster (Fruit fly).